The sequence spans 246 residues: UDP-N-acetyl-D-mannosaminuronic acid transferase (246 aa).

The protein belongs to the glycosyltransferase 26 family.

It catalyses the reaction UDP-N-acetyl-alpha-D-mannosaminouronate + N-acetyl-alpha-D-glucosaminyl-di-trans,octa-cis-undecaprenyl diphosphate = beta-D-ManNAcA-(1-&gt;4)-alpha-D-GlcNAc-di-trans,octa-cis-undecaprenyl diphosphate + UDP + H(+). Its pathway is bacterial outer membrane biogenesis; enterobacterial common antigen biosynthesis. Functionally, catalyzes the synthesis of Und-PP-GlcNAc-ManNAcA (Lipid II), the second lipid-linked intermediate involved in enterobacterial common antigen (ECA) synthesis. This chain is UDP-N-acetyl-D-mannosaminuronic acid transferase, found in Yersinia pseudotuberculosis serotype IB (strain PB1/+).